The following is a 391-amino-acid chain: Probable sugar efflux transporter (391 aa).

Transmembrane regions (helical) follow at residues 16–36 (VFVF…PVAL), 51–71 (VGLM…PLML), 82–102 (LLFL…AWNF), 103–123 (WVLL…WSIT), 138–158 (QALG…LPLG), 170–190 (TFGV…KLLP), 210–230 (PLLV…FTTY), 247–267 (ITTL…FLFG), 277–297 (FIAF…VFKN), 300–320 (WVIF…TIAL), 338–358 (IFSG…SIVI), and 361–381 (LGLE…LFWL).

Belongs to the major facilitator superfamily. SotB (TC 2.A.1.2) family.

Its subcellular location is the cell inner membrane. Its function is as follows. Involved in the efflux of sugars. The physiological role may be the reduction of the intracellular concentration of toxic sugars or sugar metabolites. The protein is Probable sugar efflux transporter of Helicobacter pylori (strain P12).